The primary structure comprises 538 residues: ATP synthase subunit beta 2 (538 aa).

Over residues 1-10 (MADPQATNGT) the composition is skewed to polar residues. The tract at residues 1–30 (MADPQATNGTGAACAERDASDVGDVSDVGD) is disordered. ATP is bound at residue 185–192 (GGAGVGKT). Positions 494-505 (AAAREADARREA) are enriched in basic and acidic residues. Residues 494-538 (AAAREADARREAAAAASVAGPGTTSGTTSDPASGSAEPQGARHGR) are disordered. Positions 506 to 529 (AAAASVAGPGTTSGTTSDPASGSA) are enriched in low complexity.

Belongs to the ATPase alpha/beta chains family. In terms of assembly, F-type ATPases have 2 components, CF(1) - the catalytic core - and CF(0) - the membrane proton channel. CF(1) has five subunits: alpha(3), beta(3), gamma(1), delta(1), epsilon(1). CF(0) has three main subunits: a(1), b(2) and c(9-12). The alpha and beta chains form an alternating ring which encloses part of the gamma chain. CF(1) is attached to CF(0) by a central stalk formed by the gamma and epsilon chains, while a peripheral stalk is formed by the delta and b chains.

It localises to the cell inner membrane. It catalyses the reaction ATP + H2O + 4 H(+)(in) = ADP + phosphate + 5 H(+)(out). In terms of biological role, produces ATP from ADP in the presence of a proton gradient across the membrane. The catalytic sites are hosted primarily by the beta subunits. This chain is ATP synthase subunit beta 2, found in Burkholderia pseudomallei (strain K96243).